The sequence spans 300 residues: tRNA dimethylallyltransferase 2 (300 aa).

13 to 20 (GPTGVGKT) contacts ATP. 15 to 20 (TGVGKT) contacts substrate. An interaction with substrate tRNA region spans residues 38-41 (DSRQ).

This sequence belongs to the IPP transferase family. In terms of assembly, monomer. Mg(2+) serves as cofactor.

The enzyme catalyses adenosine(37) in tRNA + dimethylallyl diphosphate = N(6)-dimethylallyladenosine(37) in tRNA + diphosphate. In terms of biological role, catalyzes the transfer of a dimethylallyl group onto the adenine at position 37 in tRNAs that read codons beginning with uridine, leading to the formation of N6-(dimethylallyl)adenosine (i(6)A). This Porphyromonas gingivalis (strain ATCC 33277 / DSM 20709 / CIP 103683 / JCM 12257 / NCTC 11834 / 2561) protein is tRNA dimethylallyltransferase 2.